The sequence spans 443 residues: Thymidine phosphorylase (443 aa).

It belongs to the thymidine/pyrimidine-nucleoside phosphorylase family. Homodimer.

The enzyme catalyses thymidine + phosphate = 2-deoxy-alpha-D-ribose 1-phosphate + thymine. It participates in pyrimidine metabolism; dTMP biosynthesis via salvage pathway; dTMP from thymine: step 1/2. In terms of biological role, the enzymes which catalyze the reversible phosphorolysis of pyrimidine nucleosides are involved in the degradation of these compounds and in their utilization as carbon and energy sources, or in the rescue of pyrimidine bases for nucleotide synthesis. The sequence is that of Thymidine phosphorylase from Shewanella amazonensis (strain ATCC BAA-1098 / SB2B).